Here is a 658-residue protein sequence, read N- to C-terminus: Structure-specific endonuclease subunit SLX4 (658 aa).

3 disordered regions span residues 17 to 37 (VDSD…IPGD), 74 to 123 (GATE…KSIT), and 327 to 383 (QPGV…QVLQ). 2 stretches are compositionally biased toward low complexity: residues 75–90 (ATES…PPAK) and 99–108 (KAAGRTSTGT). Residues 365–374 (FPKSPTSTPE) show a composition bias toward polar residues.

This sequence belongs to the SLX4 family. Forms a heterodimer with SLX1. Phosphorylated in response to DNA damage.

The protein resides in the nucleus. Its function is as follows. Regulatory subunit of the SLX1-SLX4 structure-specific endonuclease that resolves DNA secondary structures generated during DNA repair and recombination. Has endonuclease activity towards branched DNA substrates, introducing single-strand cuts in duplex DNA close to junctions with ss-DNA. The polypeptide is Structure-specific endonuclease subunit SLX4 (Lachancea thermotolerans (strain ATCC 56472 / CBS 6340 / NRRL Y-8284) (Yeast)).